Reading from the N-terminus, the 181-residue chain is uncharacterized protein (181 aa).

To M.jannaschii MJ1106.

This is an uncharacterized protein from Methanothermobacter thermautotrophicus (strain ATCC 29096 / DSM 1053 / JCM 10044 / NBRC 100330 / Delta H) (Methanobacterium thermoautotrophicum).